The following is a 320-amino-acid chain: Serpentine receptor class delta-40 (320 aa).

The next 7 helical transmembrane spans lie at 12-32 (IFYPIFFIFSTITQLMLIYLI), 42-62 (MLKVFLLNTSLFQIILVVVSC), 95-115 (YQVLQTSAFMSGMSILITFVF), 133-153 (IILLFHMPIIASMVMEVIMVI), 189-209 (LINFLLISGSVVASPFISFFF), 243-263 (AFLPLIFYVPVFGLYFYCILT), and 273-293 (FMTVVPCLPAFFDPMLTLYFV).

It belongs to the nematode receptor-like protein srd family.

The protein resides in the membrane. This Caenorhabditis elegans protein is Serpentine receptor class delta-40 (srd-40).